We begin with the raw amino-acid sequence, 140 residues long: Probable disulfide formation protein C 2 (140 aa).

The chain crosses the membrane as a helical span at residues 6–25 (KYHIAIAWTIATSAMLISLI). A disulfide bond links Cys35 and Cys38. The next 2 helical transmembrane spans lie at 40–59 (YQRM…MYRK) and 66–83 (YAFP…YQIT). A disulfide bridge links Cys95 with Cys101. Residues 110 to 134 (GFISIPMLSFVGFLAIIILLYINQI) traverse the membrane as a helical segment.

The protein belongs to the DsbB family. BdbC subfamily.

It localises to the cell membrane. Functionally, required for disulfide bond formation in some proteins. The sequence is that of Probable disulfide formation protein C 2 (bdbC2) from Bacillus anthracis.